The sequence spans 154 residues: Anaerobic ribonucleoside-triphosphate reductase-activating protein (154 aa).

Residues Cys-26, Cys-30, and Cys-33 each contribute to the [4Fe-4S] cluster site. Residues 32–34 and Gly-74 each bind S-adenosyl-L-methionine; that span reads GCY.

It belongs to the organic radical-activating enzymes family. Forms a tetramer composed of two NrdD and two NrdG subunits. [4Fe-4S] cluster serves as cofactor.

It is found in the cytoplasm. It carries out the reaction glycyl-[protein] + reduced [flavodoxin] + S-adenosyl-L-methionine = glycin-2-yl radical-[protein] + semiquinone [flavodoxin] + 5'-deoxyadenosine + L-methionine + H(+). Functionally, activation of anaerobic ribonucleoside-triphosphate reductase under anaerobic conditions by generation of an organic free radical, using S-adenosylmethionine and reduced flavodoxin as cosubstrates to produce 5'-deoxy-adenosine. The polypeptide is Anaerobic ribonucleoside-triphosphate reductase-activating protein (nrdG) (Salmonella typhimurium (strain LT2 / SGSC1412 / ATCC 700720)).